We begin with the raw amino-acid sequence, 478 residues long: ATP synthase subunit beta (478 aa).

160–167 (GGAGVGKT) is an ATP binding site.

This sequence belongs to the ATPase alpha/beta chains family. In terms of assembly, F-type ATPases have 2 components, CF(1) - the catalytic core - and CF(0) - the membrane proton channel. CF(1) has five subunits: alpha(3), beta(3), gamma(1), delta(1), epsilon(1). CF(0) has three main subunits: a(1), b(2) and c(9-12). The alpha and beta chains form an alternating ring which encloses part of the gamma chain. CF(1) is attached to CF(0) by a central stalk formed by the gamma and epsilon chains, while a peripheral stalk is formed by the delta and b chains.

The protein localises to the cell inner membrane. The enzyme catalyses ATP + H2O + 4 H(+)(in) = ADP + phosphate + 5 H(+)(out). Its function is as follows. Produces ATP from ADP in the presence of a proton gradient across the membrane. The catalytic sites are hosted primarily by the beta subunits. This is ATP synthase subunit beta from Orientia tsutsugamushi (strain Boryong) (Rickettsia tsutsugamushi).